Consider the following 25-residue polypeptide: Caerin-1.4 (25 aa).

Residue Leu25 is modified to Leucine amide.

This sequence belongs to the frog skin active peptide (FSAP) family. Caerin subfamily. In terms of tissue distribution, expressed by the skin parotoid and/or rostral glands.

Its subcellular location is the secreted. Antibacterial peptide, that adopts an alpha helical conformation which can disrupt bacterial membranes. Each caerin displays a different antimicrobial specificity. This chain is Caerin-1.4, found in Ranoidea caerulea (Green tree frog).